A 409-amino-acid polypeptide reads, in one-letter code: DNA double-strand break repair protein Mre11 (409 aa).

Mn(2+)-binding residues include Asp-9, His-11, Asp-50, and Glu-85. His-86 functions as the Proton donor in the catalytic mechanism. 3 residues coordinate Mn(2+): His-170, His-199, and His-201.

Belongs to the MRE11/RAD32 family. In terms of assembly, homodimer. Forms a heterotetramer composed of two Mre11 subunits and two Rad50 subunits. Mn(2+) serves as cofactor.

With respect to regulation, nuclease activity is regulated by Rad50. Part of the Rad50/Mre11 complex, which is involved in the early steps of DNA double-strand break (DSB) repair. The complex may facilitate opening of the processed DNA ends to aid in the recruitment of HerA and NurA. Mre11 binds to DSB ends and has both double-stranded 3'-5' exonuclease activity and single-stranded endonuclease activity. This is DNA double-strand break repair protein Mre11 from Aeropyrum pernix (strain ATCC 700893 / DSM 11879 / JCM 9820 / NBRC 100138 / K1).